A 655-amino-acid polypeptide reads, in one-letter code: Tetratricopeptide repeat protein 30 homolog (655 aa).

TPR repeat units follow at residues 10–43, 44–76, 143–176, 178–210, 385–418, 450–484, and 534–567; these read EGHV…ANTR, AGLS…APKE, ADTL…GGFN, LVAY…GMRN, LAAK…YLPV, SIWR…HSDD, and CIVN…GSGN.

This sequence belongs to the TTC30/dfy-1/fleer family.

The protein resides in the cell projection. The protein localises to the cilium. Functionally, required for polyglutamylation of axonemal tubulin in sensory cilia. Plays a role in anterograde intraflagellar transport (IFT), the process by which cilia precursors are transported from the base of the cilium to the site of their incorporation at the tip. The protein is Tetratricopeptide repeat protein 30 homolog of Drosophila melanogaster (Fruit fly).